Consider the following 469-residue polypeptide: 3-isopropylmalate dehydratase large subunit (469 aa).

[4Fe-4S] cluster is bound by residues C347, C408, and C411.

This sequence belongs to the aconitase/IPM isomerase family. LeuC type 1 subfamily. In terms of assembly, heterodimer of LeuC and LeuD. [4Fe-4S] cluster serves as cofactor.

The enzyme catalyses (2R,3S)-3-isopropylmalate = (2S)-2-isopropylmalate. The protein operates within amino-acid biosynthesis; L-leucine biosynthesis; L-leucine from 3-methyl-2-oxobutanoate: step 2/4. Its function is as follows. Catalyzes the isomerization between 2-isopropylmalate and 3-isopropylmalate, via the formation of 2-isopropylmaleate. This chain is 3-isopropylmalate dehydratase large subunit, found in Histophilus somni (strain 129Pt) (Haemophilus somnus).